We begin with the raw amino-acid sequence, 70 residues long: Large ribosomal subunit protein uL29 (70 aa).

It belongs to the universal ribosomal protein uL29 family.

The chain is Large ribosomal subunit protein uL29 from Clostridium novyi (strain NT).